We begin with the raw amino-acid sequence, 618 residues long: Indolepyruvate oxidoreductase subunit IorA (618 aa).

4Fe-4S ferredoxin-type domains follow at residues 559–590 (RPVR…DGRV) and 588–617 (GRVF…PEGK). Cys-568, Cys-571, Cys-574, Cys-580, Cys-597, Cys-600, Cys-603, and Cys-607 together coordinate [4Fe-4S] cluster.

As to quaternary structure, heterodimer of the IorA and IorB subunits. Requires [4Fe-4S] cluster as cofactor.

It catalyses the reaction indole-3-pyruvate + 2 oxidized [2Fe-2S]-[ferredoxin] + CoA = (indol-3-yl)acetyl-CoA + 2 reduced [2Fe-2S]-[ferredoxin] + CO2 + H(+). Its function is as follows. Catalyzes the ferredoxin-dependent oxidative decarboxylation of arylpyruvates. The protein is Indolepyruvate oxidoreductase subunit IorA (iorA) of Methanothermobacter marburgensis (strain ATCC BAA-927 / DSM 2133 / JCM 14651 / NBRC 100331 / OCM 82 / Marburg) (Methanobacterium thermoautotrophicum).